The sequence spans 104 residues: Large ribosomal subunit protein bL21 (104 aa).

This sequence belongs to the bacterial ribosomal protein bL21 family. Part of the 50S ribosomal subunit. Contacts protein L20.

Its function is as follows. This protein binds to 23S rRNA in the presence of protein L20. This is Large ribosomal subunit protein bL21 from Clostridium botulinum (strain 657 / Type Ba4).